The sequence spans 590 residues: Aspartate--tRNA(Asp/Asn) ligase (590 aa).

Position 175 (glutamate 175) interacts with L-aspartate. Residues 199 to 202 are aspartate; the sequence is QQFK. Positions 221 and 452 each coordinate L-aspartate. An ATP-binding site is contributed by 221 to 223; it reads RDE. Residue glutamate 485 participates in ATP binding. Arginine 492 contacts L-aspartate. 537–540 is an ATP binding site; the sequence is GIDR.

This sequence belongs to the class-II aminoacyl-tRNA synthetase family. Type 1 subfamily. In terms of assembly, homodimer.

It is found in the cytoplasm. The catalysed reaction is tRNA(Asx) + L-aspartate + ATP = L-aspartyl-tRNA(Asx) + AMP + diphosphate. In terms of biological role, aspartyl-tRNA synthetase with relaxed tRNA specificity since it is able to aspartylate not only its cognate tRNA(Asp) but also tRNA(Asn). Reaction proceeds in two steps: L-aspartate is first activated by ATP to form Asp-AMP and then transferred to the acceptor end of tRNA(Asp/Asn). The sequence is that of Aspartate--tRNA(Asp/Asn) ligase from Dinoroseobacter shibae (strain DSM 16493 / NCIMB 14021 / DFL 12).